Consider the following 639-residue polypeptide: Threonine--tRNA ligase (639 aa).

The TGS domain maps to 1–61 (MIRITLPDNS…DHDARLQIIT (61 aa)). The interval 242–533 (DHRRLGRELD…LIEQHAGALP (292 aa)) is catalytic. Residues C333, H384, and H510 each contribute to the Zn(2+) site.

Belongs to the class-II aminoacyl-tRNA synthetase family. In terms of assembly, homodimer. It depends on Zn(2+) as a cofactor.

The protein resides in the cytoplasm. The enzyme catalyses tRNA(Thr) + L-threonine + ATP = L-threonyl-tRNA(Thr) + AMP + diphosphate + H(+). Functionally, catalyzes the attachment of threonine to tRNA(Thr) in a two-step reaction: L-threonine is first activated by ATP to form Thr-AMP and then transferred to the acceptor end of tRNA(Thr). Also edits incorrectly charged L-seryl-tRNA(Thr). This chain is Threonine--tRNA ligase, found in Paracidovorax citrulli (strain AAC00-1) (Acidovorax citrulli).